A 95-amino-acid chain; its full sequence is UPF0298 protein LVIS_1401 (95 aa).

Belongs to the UPF0298 family.

It is found in the cytoplasm. This chain is UPF0298 protein LVIS_1401, found in Levilactobacillus brevis (strain ATCC 367 / BCRC 12310 / CIP 105137 / JCM 1170 / LMG 11437 / NCIMB 947 / NCTC 947) (Lactobacillus brevis).